A 417-amino-acid chain; its full sequence is Probable serpin E3 (417 aa).

Residues 1–24 form the signal peptide; sequence MPQLSASSLFICLWLVDLCHVANS. N50, N106, N140, N147, and N152 each carry an N-linked (GlcNAc...) asparagine glycan.

It belongs to the serpin family.

The protein localises to the secreted. Its function is as follows. Probable serine protease inhibitor. The protein is Probable serpin E3 (serpine3) of Danio rerio (Zebrafish).